A 579-amino-acid chain; its full sequence is Arginine--tRNA ligase (579 aa).

Positions 127 to 137 (ANPTGPLHVGH) match the 'HIGH' region motif.

It belongs to the class-I aminoacyl-tRNA synthetase family. Monomer.

The protein localises to the cytoplasm. It catalyses the reaction tRNA(Arg) + L-arginine + ATP = L-arginyl-tRNA(Arg) + AMP + diphosphate. The chain is Arginine--tRNA ligase from Acidithiobacillus ferrooxidans (strain ATCC 23270 / DSM 14882 / CIP 104768 / NCIMB 8455) (Ferrobacillus ferrooxidans (strain ATCC 23270)).